A 563-amino-acid polypeptide reads, in one-letter code: uncharacterized protein (563 aa).

The tract at residues 30–303 (QSIEIQPEEK…EKSPEKQVEI (274 aa)) is disordered. Over residues 36-56 (PEEKPSEEKQPEEKSSEEKPK) the composition is skewed to basic and acidic residues. Positions 61-72 (SAINSEKTQKPI) are enriched in polar residues. 3 stretches are compositionally biased toward basic and acidic residues: residues 101–115 (TTER…DDKQ), 123–276 (ERGR…EPRP), and 282–303 (EKSP…QVEI).

This sequence belongs to the mimivirus L41 family.

This is an uncharacterized protein from Acanthamoeba polyphaga (Amoeba).